Consider the following 555-residue polypeptide: Glypican-6 (555 aa).

Positions 1-23 (MPSWIRAVILPLSGLLLTLPAAA) are cleaved as a signal peptide. Over residues 348-357 (PALRSARSAP) the composition is skewed to low complexity. 2 disordered regions span residues 348 to 376 (PALR…PTTA) and 480 to 501 (GNDV…GSGC). S530 carries the GPI-anchor amidated serine lipid modification. Positions 531–555 (ASKFSSSLISWSLVCMVLALQRLYR) are cleaved as a propeptide — removed in mature form.

It belongs to the glypican family. In terms of tissue distribution, in the cartilage growth-plate, gradient of expression with highest levels from the proliferative and pre-hypertrophic zones to lowest, if any, in the hypertrophic zones (at protein level).

The protein resides in the cell membrane. Its subcellular location is the secreted. The protein localises to the extracellular space. Cell surface proteoglycan that bears heparan sulfate. Putative cell surface coreceptor for growth factors, extracellular matrix proteins, proteases and anti-proteases. Enhances migration and invasion of cancer cells through WNT5A signaling. This is Glypican-6 (Gpc6) from Mus musculus (Mouse).